Here is a 374-residue protein sequence, read N- to C-terminus: Glyceraldehyde-3-phosphate dehydrogenase A, chloroplastic (374 aa).

The transit peptide at 1–34 directs the protein to the chloroplast; it reads MAAMMQKSAFTGSAVSSKSGVRAKAARAVVDVRA. NADP(+)-binding positions include 47–48, Asp71, and Arg116; that span reads RI. Residues Cys55 and Cys325 are joined by a disulfide bond. D-glyceraldehyde 3-phosphate contacts are provided by residues 189-191, Thr220, Arg235, 248-249, and Arg271; these read SCT and TG. Catalysis depends on Cys190, which acts as the Nucleophile. Asn353 serves as a coordination point for NADP(+).

The protein belongs to the glyceraldehyde-3-phosphate dehydrogenase family. Homotetramer. Component of a complex that contains two dimers of PRK, two tetramers of GAPDH and CP12. CP12 associates with GAPDH, causing its conformation to change. This GAPDH/CP12 complex binds PRK to form a half-complex (one unit). This unit probably dimerizes due partially to interactions between the enzymes of each unit.

The protein localises to the plastid. Its subcellular location is the chloroplast. The catalysed reaction is D-glyceraldehyde 3-phosphate + phosphate + NADP(+) = (2R)-3-phospho-glyceroyl phosphate + NADPH + H(+). The protein operates within carbohydrate biosynthesis; Calvin cycle. In Chlamydomonas reinhardtii (Chlamydomonas smithii), this protein is Glyceraldehyde-3-phosphate dehydrogenase A, chloroplastic (GAPA).